The primary structure comprises 178 residues: MSGGKYVDAEGLLYSVPSRDQGNIYKPHNKTMADDLPEKQLYDAHTKEIDLVNRDPKHLNDDVVKIDFEDVIAEPEGTHSFDGIWKASFTTFTVTKYWFYRLLSALLGIPLALLWGIYFAILSFLHIWAVVPCIRSYLIEIQCISRVYSICIHTFCDPLFEAIGKVFSNIRATVQKEI.

Ser2 is modified (N-acetylserine). Ser2 carries the post-translational modification Phosphoserine. The segment at 2-94 (SGGKYVDAEG…WKASFTTFTV (93 aa)) is required for homooligomerization. Topologically, residues 2–104 (SGGKYVDAEG…TKYWFYRLLS (103 aa)) are cytoplasmic. Residue Lys5 is modified to N6-acetyllysine; alternate. Lys5 participates in a covalent cross-link: Glycyl lysine isopeptide (Lys-Gly) (interchain with G-Cter in ubiquitin); alternate. Tyr6 bears the Phosphotyrosine mark. Tyr14 is modified (phosphotyrosine; by ABL1). The residue at position 25 (Tyr25) is a Phosphotyrosine. Glycyl lysine isopeptide (Lys-Gly) (interchain with G-Cter in ubiquitin) cross-links involve residues Lys26, Lys30, Lys39, Lys47, and Lys57. The interval 82–94 (DGIWKASFTTFTV) is interaction with CAVIN3. Residues 105–125 (ALLGIPLALLWGIYFAILSFL) constitute an intramembrane region (helical). Residues 126-178 (HIWAVVPCIRSYLIEIQCISRVYSICIHTFCDPLFEAIGKVFSNIRATVQKEI) are Cytoplasmic-facing. The segment at 131-142 (VPCIRSYLIEIQ) is interacts with SPRY1, SPRY2, SPRY3 and SPRY4. S-palmitoyl cysteine attachment occurs at residues Cys133, Cys143, and Cys156. Residues 149–160 (SICIHTFCDPLF) are interacts with SPRY1, SPRY2, and SPRY4. The interval 167-178 (FSNIRATVQKEI) is interacts with SPRY1, SPRY2, SPRY3 and SPRY4.

Belongs to the caveolin family. As to quaternary structure, homooligomer. Interacts with GLIPR2. Interacts with NOSTRIN. Interacts with SNAP25 and STX1A. Interacts (via the N-terminus) with DPP4; the interaction is direct. Interacts with CTNNB1, CDH1 and JUP. Interacts with PACSIN2; this interaction induces membrane tubulation. Interacts with SLC7A9. Interacts with BMX and BTK. Interacts with TGFBR1. Interacts with CAVIN3 (via leucine-zipper domain) in a cholesterol-sensitive manner. Interacts with CAVIN1. Interacts with EHD2 in a cholesterol-dependent manner. Forms a ternary complex with UBXN6 and VCP; mediates CAV1 targeting to lysosomes for degradation. Interacts with ABCG1; this interaction regulates ABCG1-mediated cholesterol efflux. Interacts with NEU3; this interaction enhances NEU3 sialidase activity within caveola. Interacts (via C-terminus) with SPRY1, SPRY2 (via C-terminus), SPRY3, and SPRY4. Interacts with IGFBP5; this interaction allows trafficking of IGFBP5 from the plasma membrane to the nucleus. In terms of processing, phosphorylated at Tyr-14 by ABL1 in response to oxidative stress. Ubiquitinated. Undergo monoubiquitination and multi- and/or polyubiquitination. Monoubiquitination of N-terminal lysines promotes integration in a ternary complex with UBXN6 and VCP which promotes oligomeric CAV1 targeting to lysosomes for degradation. Ubiquitinated by ZNRF1; leading to degradation and modulation of the TLR4-mediated immune response.

It is found in the golgi apparatus membrane. It localises to the cell membrane. The protein localises to the membrane. Its subcellular location is the caveola. The protein resides in the membrane raft. May act as a scaffolding protein within caveolar membranes. Forms a stable heterooligomeric complex with CAV2 that targets to lipid rafts and drives caveolae formation. Mediates the recruitment of CAVIN proteins (CAVIN1/2/3/4) to the caveolae. Interacts directly with G-protein alpha subunits and can functionally regulate their activity. Involved in the costimulatory signal essential for T-cell receptor (TCR)-mediated T-cell activation. Its binding to DPP4 induces T-cell proliferation and NF-kappa-B activation in a T-cell receptor/CD3-dependent manner. Recruits CTNNB1 to caveolar membranes and may regulate CTNNB1-mediated signaling through the Wnt pathway. Negatively regulates TGFB1-mediated activation of SMAD2/3 by mediating the internalization of TGFBR1 from membrane rafts leading to its subsequent degradation. Binds 20(S)-hydroxycholesterol (20(S)-OHC). The sequence is that of Caveolin-1 (CAV1) from Ornithorhynchus anatinus (Duckbill platypus).